We begin with the raw amino-acid sequence, 250 residues long: 1-(5-phosphoribosyl)-5-[(5-phosphoribosylamino)methylideneamino] imidazole-4-carboxamide isomerase (250 aa).

D12 functions as the Proton acceptor in the catalytic mechanism. The active-site Proton donor is D134.

It belongs to the HisA/HisF family.

It localises to the cytoplasm. The enzyme catalyses 1-(5-phospho-beta-D-ribosyl)-5-[(5-phospho-beta-D-ribosylamino)methylideneamino]imidazole-4-carboxamide = 5-[(5-phospho-1-deoxy-D-ribulos-1-ylimino)methylamino]-1-(5-phospho-beta-D-ribosyl)imidazole-4-carboxamide. The protein operates within amino-acid biosynthesis; L-histidine biosynthesis; L-histidine from 5-phospho-alpha-D-ribose 1-diphosphate: step 4/9. The sequence is that of 1-(5-phosphoribosyl)-5-[(5-phosphoribosylamino)methylideneamino] imidazole-4-carboxamide isomerase from Actinobacillus pleuropneumoniae serotype 7 (strain AP76).